A 146-amino-acid chain; its full sequence is Holo-[acyl-carrier-protein] synthase (146 aa).

Residues Asp-8 and Glu-61 each coordinate Mg(2+).

It belongs to the P-Pant transferase superfamily. AcpS family. It depends on Mg(2+) as a cofactor.

Its subcellular location is the cytoplasm. It carries out the reaction apo-[ACP] + CoA = holo-[ACP] + adenosine 3',5'-bisphosphate + H(+). Transfers the 4'-phosphopantetheine moiety from coenzyme A to a Ser of acyl-carrier-protein. This is Holo-[acyl-carrier-protein] synthase from Rhodopseudomonas palustris (strain TIE-1).